A 126-amino-acid chain; its full sequence is Large ribosomal subunit protein bL12 (126 aa).

Belongs to the bacterial ribosomal protein bL12 family. Homodimer. Part of the ribosomal stalk of the 50S ribosomal subunit. Forms a multimeric L10(L12)X complex, where L10 forms an elongated spine to which 2 to 4 L12 dimers bind in a sequential fashion. Binds GTP-bound translation factors.

Forms part of the ribosomal stalk which helps the ribosome interact with GTP-bound translation factors. Is thus essential for accurate translation. This Desulfatibacillum aliphaticivorans protein is Large ribosomal subunit protein bL12.